The primary structure comprises 284 residues: 4-hydroxybenzoate octaprenyltransferase (284 aa).

Transmembrane regions (helical) follow at residues 18–38 (PIGTLLLLWPTLWALIIAAEG), 42–62 (WHVLLVFVLGVVLMRSAGCVI), 93–113 (IILFLLLGISSFLLVLTMNPL), 136–156 (HLPQLFLGLAFSWAIPMAWAA), 161–181 (LPWVVWFVFAINALWTIAYDT), 209–229 (LIIGLLQLLTLVMLVWLGLHY), 233–253 (QSFYWSVLAAGALFVYQQHLI), and 264–284 (AFLNNNYVGMVLALGLFVAFW).

It belongs to the UbiA prenyltransferase family. Requires Mg(2+) as cofactor.

The protein localises to the cell inner membrane. The catalysed reaction is all-trans-octaprenyl diphosphate + 4-hydroxybenzoate = 4-hydroxy-3-(all-trans-octaprenyl)benzoate + diphosphate. It participates in cofactor biosynthesis; ubiquinone biosynthesis. Catalyzes the prenylation of para-hydroxybenzoate (PHB) with an all-trans polyprenyl group. Mediates the second step in the final reaction sequence of ubiquinone-8 (UQ-8) biosynthesis, which is the condensation of the polyisoprenoid side chain with PHB, generating the first membrane-bound Q intermediate 3-octaprenyl-4-hydroxybenzoate. The chain is 4-hydroxybenzoate octaprenyltransferase from Vibrio vulnificus (strain CMCP6).